The chain runs to 511 residues: Dihydrolipoyl dehydrogenase, mitochondrial (511 aa).

FAD-binding positions include 75–84 (EKRGTLGGTC), Lys93, Gly157, and 187–189 (TGS). The cysteines at positions 84 and 89 are disulfide-linked. Residues 224 to 231 (GGGIIGLE), Glu247, Leu281, and Gly316 contribute to the NAD(+) site. Residues Asp357 and 363–366 (MLAH) each bind FAD. The active-site Proton acceptor is His489.

It belongs to the class-I pyridine nucleotide-disulfide oxidoreductase family. As to quaternary structure, homodimer. FAD serves as cofactor.

It localises to the mitochondrion matrix. The catalysed reaction is N(6)-[(R)-dihydrolipoyl]-L-lysyl-[protein] + NAD(+) = N(6)-[(R)-lipoyl]-L-lysyl-[protein] + NADH + H(+). Its function is as follows. Lipoamide dehydrogenase is a component of the alpha-ketoacid dehydrogenase complexes. Malfunction of this protein blocks the progression of cell cycle from G1 to S phase. This chain is Dihydrolipoyl dehydrogenase, mitochondrial (dld1), found in Schizosaccharomyces pombe (strain 972 / ATCC 24843) (Fission yeast).